A 164-amino-acid chain; its full sequence is 6,7-dimethyl-8-ribityllumazine synthase (164 aa).

Residues phenylalanine 24, 62–64 (SFE), and 86–88 (AVI) contribute to the 5-amino-6-(D-ribitylamino)uracil site. 91 to 92 (QT) contributes to the (2S)-2-hydroxy-3-oxobutyl phosphate binding site. Histidine 94 functions as the Proton donor in the catalytic mechanism. Residue phenylalanine 119 participates in 5-amino-6-(D-ribitylamino)uracil binding. Arginine 133 lines the (2S)-2-hydroxy-3-oxobutyl phosphate pocket.

The protein belongs to the DMRL synthase family.

The enzyme catalyses (2S)-2-hydroxy-3-oxobutyl phosphate + 5-amino-6-(D-ribitylamino)uracil = 6,7-dimethyl-8-(1-D-ribityl)lumazine + phosphate + 2 H2O + H(+). It participates in cofactor biosynthesis; riboflavin biosynthesis; riboflavin from 2-hydroxy-3-oxobutyl phosphate and 5-amino-6-(D-ribitylamino)uracil: step 1/2. Functionally, catalyzes the formation of 6,7-dimethyl-8-ribityllumazine by condensation of 5-amino-6-(D-ribitylamino)uracil with 3,4-dihydroxy-2-butanone 4-phosphate. This is the penultimate step in the biosynthesis of riboflavin. The sequence is that of 6,7-dimethyl-8-ribityllumazine synthase from Synechocystis sp. (strain ATCC 27184 / PCC 6803 / Kazusa).